We begin with the raw amino-acid sequence, 453 residues long: Bifunctional protein GlmU (453 aa).

Residues 1-227 (MNKLSVVILA…LMEVEGVNNR (227 aa)) are pyrophosphorylase. UDP-N-acetyl-alpha-D-glucosamine-binding positions include 9 to 12 (LAAG), K23, Q74, 79 to 80 (GT), 101 to 103 (YGD), G138, E152, N167, and N225. D103 contacts Mg(2+). Mg(2+) is bound at residue N225. A linker region spans residues 228 to 248 (LQLANLERHFQRKQVEKLLLA). An N-acetyltransferase region spans residues 249-453 (GVTFADPARF…ISNWQRPKRK (205 aa)). R331 and K349 together coordinate UDP-N-acetyl-alpha-D-glucosamine. H361 acts as the Proton acceptor in catalysis. UDP-N-acetyl-alpha-D-glucosamine-binding residues include Y364 and N375. Acetyl-CoA contacts are provided by residues A378, 384–385 (NY), S403, A421, and R438.

This sequence in the N-terminal section; belongs to the N-acetylglucosamine-1-phosphate uridyltransferase family. It in the C-terminal section; belongs to the transferase hexapeptide repeat family. Homotrimer. It depends on Mg(2+) as a cofactor.

The protein resides in the cytoplasm. The catalysed reaction is alpha-D-glucosamine 1-phosphate + acetyl-CoA = N-acetyl-alpha-D-glucosamine 1-phosphate + CoA + H(+). The enzyme catalyses N-acetyl-alpha-D-glucosamine 1-phosphate + UTP + H(+) = UDP-N-acetyl-alpha-D-glucosamine + diphosphate. The protein operates within nucleotide-sugar biosynthesis; UDP-N-acetyl-alpha-D-glucosamine biosynthesis; N-acetyl-alpha-D-glucosamine 1-phosphate from alpha-D-glucosamine 6-phosphate (route II): step 2/2. Its pathway is nucleotide-sugar biosynthesis; UDP-N-acetyl-alpha-D-glucosamine biosynthesis; UDP-N-acetyl-alpha-D-glucosamine from N-acetyl-alpha-D-glucosamine 1-phosphate: step 1/1. It participates in bacterial outer membrane biogenesis; LPS lipid A biosynthesis. Catalyzes the last two sequential reactions in the de novo biosynthetic pathway for UDP-N-acetylglucosamine (UDP-GlcNAc). The C-terminal domain catalyzes the transfer of acetyl group from acetyl coenzyme A to glucosamine-1-phosphate (GlcN-1-P) to produce N-acetylglucosamine-1-phosphate (GlcNAc-1-P), which is converted into UDP-GlcNAc by the transfer of uridine 5-monophosphate (from uridine 5-triphosphate), a reaction catalyzed by the N-terminal domain. In Histophilus somni (strain 129Pt) (Haemophilus somnus), this protein is Bifunctional protein GlmU.